The following is a 917-amino-acid chain: Interleukin-6 receptor subunit beta (917 aa).

The signal sequence occupies residues 1 to 22; the sequence is MSAPRIWLAQALLFFLTTESIG. The Extracellular segment spans residues 23–617; the sequence is QLLEPCGYIY…TPKFAQGEIE (595 aa). The Ig-like C2-type domain occupies 26-120; it reads EPCGYIYPEF…IEQNVYGVTM (95 aa). 2 cysteine pairs are disulfide-bonded: cysteine 28-cysteine 54 and cysteine 48-cysteine 103. Residues asparagine 43, asparagine 61, asparagine 83, and asparagine 131 are each glycosylated (N-linked (GlcNAc...) asparagine). 5 consecutive Fibronectin type-III domains span residues 128-221, 222-322, 327-417, 422-515, and 517-611; these read KPTN…VKPT, PPYN…TYED, PPSF…IPSP, AYSV…LKQA, and PARG…TPKF. An intrachain disulfide couples cysteine 134 to cysteine 144. Asparagine 157 carries N-linked (GlcNAc...) asparagine glycosylation. Residues cysteine 172 and cysteine 180 are joined by a disulfide bond. The N-linked (GlcNAc...) asparagine glycan is linked to asparagine 225. The WSXWS motif signature appears at 308–312; that stretch reads WSDWS. Asparagine 388 carries an N-linked (GlcNAc...) asparagine glycan. Cysteine 456 and cysteine 464 are oxidised to a cystine. N-linked (GlcNAc...) asparagine glycans are attached at residues asparagine 476 and asparagine 551. A helical membrane pass occupies residues 618 to 639; it reads AIVVPVCLAFLLTTLLGVLFCF. The Cytoplasmic portion of the chain corresponds to 640–917; it reads NKRDLIKKHI…TVRQGGYMPQ (278 aa). Positions 649-657 match the Box 1 motif motif; the sequence is IWPNVPDPS. 2 disordered regions span residues 658 to 678 and 719 to 754; these read KSHI…NSKD and TEGH…TAST. Residues serine 659 and serine 665 each carry the phosphoserine modification. Over residues 729 to 753 the composition is skewed to low complexity; that stretch reads SSCMSSSRPSISSNEENESAQSTAS. Phosphoserine occurs at positions 780, 787, 827, and 837. Residues 898-917 form a disordered region; sequence EEIPKSYLPQTVRQGGYMPQ.

This sequence belongs to the type I cytokine receptor family. Type 2 subfamily. Component of a hexamer of two molecules each of IL6, IL6R and IL6ST; associates with the complex IL6:IL6R but does not interact with IL6. Forms heterodimers composed of LIFR and IL6ST (type I OSM receptor) which are activated by LIF and OSM. Also forms heterodimers composed of OSMR and IL6ST (type II receptor) which are activated by OSM but not by LIF. Interacts with HCK. Interacts with INPP5D/SHIP1. Interacts with SRC and YES. Interacts with ARMH4; this interaction prevents IL6ST protein homodimerization and bridges ARMH4 with IL6R and STAT3 and therefore inhibits phosphorylation of STAT3 at 'Tyr-705'. Post-translationally, phosphorylation of Ser-780 down-regulates cell surface expression. In terms of processing, heavily N-glycosylated. Glycosylation is required for protein stability and localization in plasma membrane but not for ligand binding. As to expression, expression not restricted to IL6-responsive cells. Found in tissues such as brain, heart, thymus, spleen, kidney, lung and liver. Found in all the cell lines tested except BaF-B03. Expressed paraventricular nucleus of the hypothalamus.

Its subcellular location is the cell membrane. In terms of biological role, signal-transducing molecule. The receptor systems for IL6, LIF, OSM, CNTF, IL11, CTF1 and BSF3 can utilize IL6ST for initiating signal transmission. Binding of IL6 to IL6R induces IL6ST homodimerization and formation of a high-affinity receptor complex, which activates the intracellular JAK-MAPK and JAK-STAT3 signaling pathways. That causes phosphorylation of IL6ST tyrosine residues which in turn activates STAT3. In parallel, the IL6 signaling pathway induces the expression of two cytokine receptor signaling inhibitors, SOCS1 and SOCS3, which inhibit JAK and terminate the activity of the IL6 signaling pathway as a negative feedback loop. Also activates the yes-associated protein 1 (YAP) and NOTCH pathways to control inflammation-induced epithelial regeneration, independently of STAT3. Mediates signals which regulate immune response, hematopoiesis, pain control and bone metabolism. Has a role in embryonic development. Essential for survival of motor and sensory neurons and for differentiation of astrocytes. Required for expression of TRPA1 in nociceptive neurons. Required for the maintenance of PTH1R expression in the osteoblast lineage and for the stimulation of PTH-induced osteoblast differentiation. Required for normal trabecular bone mass and cortical bone composition. In Mus musculus (Mouse), this protein is Interleukin-6 receptor subunit beta.